The chain runs to 104 residues: Phosphoribosyl-ATP pyrophosphatase (104 aa).

This sequence belongs to the PRA-PH family.

The protein localises to the cytoplasm. The enzyme catalyses 1-(5-phospho-beta-D-ribosyl)-ATP + H2O = 1-(5-phospho-beta-D-ribosyl)-5'-AMP + diphosphate + H(+). It functions in the pathway amino-acid biosynthesis; L-histidine biosynthesis; L-histidine from 5-phospho-alpha-D-ribose 1-diphosphate: step 2/9. This chain is Phosphoribosyl-ATP pyrophosphatase, found in Allorhizobium ampelinum (strain ATCC BAA-846 / DSM 112012 / S4) (Agrobacterium vitis (strain S4)).